A 368-amino-acid polypeptide reads, in one-letter code: N-acetylneuraminate epimerase (368 aa).

The first 19 residues, 1 to 19, serve as a signal peptide directing secretion; the sequence is MNKTIMALAIMMASFAANA. 7 Kelch repeats span residues 40–84, 86–137, 139–173, 174–219, 222–265, 287–336, and 338–367; these read TVYI…AFID, NLYV…FVHN, KAYV…KINA, HYFD…VNKG, TWLI…VAGG, ENYQ…PWNN, and LLII…VTVQ. Residue glutamate 228 is the Proton acceptor of the active site.

The protein belongs to the NanM family. In terms of assembly, homodimer.

It localises to the periplasm. It catalyses the reaction N-acetyl-alpha-neuraminate = N-acetyl-beta-neuraminate. Its function is as follows. Converts alpha-N-acetylneuranimic acid (Neu5Ac) to the beta-anomer, accelerating the equilibrium between the alpha- and beta-anomers. Probably facilitates sialidase-negative bacteria to compete successfully for limited amounts of extracellular Neu5Ac, which is likely taken up in the beta-anomer. In addition, the rapid removal of sialic acid from solution might be advantageous to the bacterium to damp down host responses. The sequence is that of N-acetylneuraminate epimerase from Shigella flexneri serotype 5b (strain 8401).